The following is a 428-amino-acid chain: Trigger factor (428 aa).

The region spanning 163–248 is the PPIase FKBP-type domain; sequence GDTAVIDFEG…IKEIKVKELP (86 aa).

It belongs to the FKBP-type PPIase family. Tig subfamily.

It localises to the cytoplasm. The enzyme catalyses [protein]-peptidylproline (omega=180) = [protein]-peptidylproline (omega=0). Functionally, involved in protein export. Acts as a chaperone by maintaining the newly synthesized protein in an open conformation. Functions as a peptidyl-prolyl cis-trans isomerase. The sequence is that of Trigger factor from Ruminiclostridium cellulolyticum (strain ATCC 35319 / DSM 5812 / JCM 6584 / H10) (Clostridium cellulolyticum).